A 177-amino-acid chain; its full sequence is ATP synthase subunit delta (177 aa).

It belongs to the ATPase delta chain family. In terms of assembly, F-type ATPases have 2 components, F(1) - the catalytic core - and F(0) - the membrane proton channel. F(1) has five subunits: alpha(3), beta(3), gamma(1), delta(1), epsilon(1). F(0) has three main subunits: a(1), b(2) and c(10-14). The alpha and beta chains form an alternating ring which encloses part of the gamma chain. F(1) is attached to F(0) by a central stalk formed by the gamma and epsilon chains, while a peripheral stalk is formed by the delta and b chains.

The protein resides in the cell inner membrane. F(1)F(0) ATP synthase produces ATP from ADP in the presence of a proton or sodium gradient. F-type ATPases consist of two structural domains, F(1) containing the extramembraneous catalytic core and F(0) containing the membrane proton channel, linked together by a central stalk and a peripheral stalk. During catalysis, ATP synthesis in the catalytic domain of F(1) is coupled via a rotary mechanism of the central stalk subunits to proton translocation. Functionally, this protein is part of the stalk that links CF(0) to CF(1). It either transmits conformational changes from CF(0) to CF(1) or is implicated in proton conduction. The polypeptide is ATP synthase subunit delta (Herminiimonas arsenicoxydans).